A 33-amino-acid polypeptide reads, in one-letter code: Mytimycin (33 aa).

It is found in the secreted. Its function is as follows. Has antifungal activity against N.crassa and F.culmorum. This Mytilus edulis (Blue mussel) protein is Mytimycin.